Reading from the N-terminus, the 931-residue chain is Bifunctional uridylyltransferase/uridylyl-removing enzyme (931 aa).

Positions 1 to 383 are uridylyltransferase; that stretch reads MDSVATDSKA…TTGSTWRRVP (383 aa). Residues 384–739 are uridylyl-removing; that stretch reads ESDDFIVDNN…VGFDPARGVT (356 aa). One can recognise an HD domain in the interval 499–622; sequence VDEHLIRCIG…VQSVEQMKLL (124 aa). ACT domains follow at residues 740-822 and 851-931; these read ELTI…AVAR and VIEV…QPAA.

This sequence belongs to the GlnD family. Mg(2+) is required as a cofactor.

It carries out the reaction [protein-PII]-L-tyrosine + UTP = [protein-PII]-uridylyl-L-tyrosine + diphosphate. The enzyme catalyses [protein-PII]-uridylyl-L-tyrosine + H2O = [protein-PII]-L-tyrosine + UMP + H(+). Its activity is regulated as follows. Uridylyltransferase (UTase) activity is inhibited by glutamine, while glutamine activates uridylyl-removing (UR) activity. Modifies, by uridylylation and deuridylylation, the PII regulatory proteins (GlnB and homologs), in response to the nitrogen status of the cell that GlnD senses through the glutamine level. Under low glutamine levels, catalyzes the conversion of the PII proteins and UTP to PII-UMP and PPi, while under higher glutamine levels, GlnD hydrolyzes PII-UMP to PII and UMP (deuridylylation). Thus, controls uridylylation state and activity of the PII proteins, and plays an important role in the regulation of nitrogen fixation and metabolism. This is Bifunctional uridylyltransferase/uridylyl-removing enzyme from Bradyrhizobium sp. (strain ORS 278).